A 156-amino-acid chain; its full sequence is Small ribosomal subunit protein uS7 (156 aa).

It belongs to the universal ribosomal protein uS7 family. As to quaternary structure, part of the 30S ribosomal subunit. Contacts proteins S9 and S11.

Its function is as follows. One of the primary rRNA binding proteins, it binds directly to 16S rRNA where it nucleates assembly of the head domain of the 30S subunit. Is located at the subunit interface close to the decoding center, probably blocks exit of the E-site tRNA. This chain is Small ribosomal subunit protein uS7, found in Geobacillus sp. (strain WCH70).